Reading from the N-terminus, the 218-residue chain is Ras-related protein RABE1e (218 aa).

Residue 22–29 coordinates GTP; it reads GDSGVGKS. The Effector region signature appears at 44–52; it reads FITTIGIDF. GTP-binding positions include 70-74, 128-131, and 159-160; these read DTAGQ, NKAD, and SA. The disordered stretch occupies residues 182 to 218; the sequence is TESDTKAEPQGIKITKQDANKASSSSTNEKSACCSYV. The span at 201–211 shows a compositional bias: polar residues; the sequence is NKASSSSTNEK. Residues C214 and C215 are each lipidated (S-geranylgeranyl cysteine).

The protein belongs to the small GTPase superfamily. Rab family. Interacts with PI5K2.

The protein resides in the golgi apparatus membrane. Its subcellular location is the cell membrane. Its function is as follows. Involved in membrane trafficking from the Golgi to the plasma membrane. The polypeptide is Ras-related protein RABE1e (RABE1E) (Arabidopsis thaliana (Mouse-ear cress)).